The chain runs to 449 residues: Intestinal acid phosphatase (449 aa).

A signal peptide spans 1–19; the sequence is MVSAISIVAIFALEGFVTT. Residues 20-428 are Extracellular-facing; that stretch reads YSDGTKDLVF…TDLNKSSSFA (409 aa). His36 acts as the Nucleophile in catalysis. Asp321 acts as the Proton donor in catalysis. A helical transmembrane segment spans residues 429 to 449; sequence TVSMLFIAAILAINNNFLGLF.

It belongs to the histidine acid phosphatase family. In terms of assembly, homodimer. The N-terminus is blocked. Expressed in the intestine, specifically on the edge of the gut lumen, in the 14 posterior cells of the intestine.

It is found in the membrane. The enzyme catalyses a phosphate monoester + H2O = an alcohol + phosphate. Its function is as follows. Acid phosphatase required for normal growth and development. Specifically required for normal gut differentiation. This is Intestinal acid phosphatase from Caenorhabditis elegans.